Reading from the N-terminus, the 154-residue chain is Aspartate carbamoyltransferase regulatory chain (154 aa).

Zn(2+)-binding residues include Cys-109, Cys-114, Cys-138, and Cys-141.

Belongs to the PyrI family. Contains catalytic and regulatory chains. Zn(2+) serves as cofactor.

Involved in allosteric regulation of aspartate carbamoyltransferase. The polypeptide is Aspartate carbamoyltransferase regulatory chain (Aeromonas hydrophila subsp. hydrophila (strain ATCC 7966 / DSM 30187 / BCRC 13018 / CCUG 14551 / JCM 1027 / KCTC 2358 / NCIMB 9240 / NCTC 8049)).